We begin with the raw amino-acid sequence, 424 residues long: Enolase (424 aa).

Q162 lines the (2R)-2-phosphoglycerate pocket. The active-site Proton donor is the E204. Mg(2+) is bound by residues D241, E284, and D311. K336, R365, S366, and K387 together coordinate (2R)-2-phosphoglycerate. Residue K336 is the Proton acceptor of the active site.

It belongs to the enolase family. Mg(2+) is required as a cofactor.

It is found in the cytoplasm. The protein localises to the secreted. Its subcellular location is the cell surface. The catalysed reaction is (2R)-2-phosphoglycerate = phosphoenolpyruvate + H2O. It functions in the pathway carbohydrate degradation; glycolysis; pyruvate from D-glyceraldehyde 3-phosphate: step 4/5. Functionally, catalyzes the reversible conversion of 2-phosphoglycerate (2-PG) into phosphoenolpyruvate (PEP). It is essential for the degradation of carbohydrates via glycolysis. This is Enolase from Rhizobium meliloti (strain 1021) (Ensifer meliloti).